The sequence spans 427 residues: Protein TIFY 6a (427 aa).

Basic and acidic residues predominate over residues 1–25; that stretch reads MERDFLGAIWRKEEAAGKPEEHSDY. Disordered regions lie at residues 1–32 and 128–154; these read MERD…GGGA and YGVA…HANP. Residues 136–146 are compositionally biased toward pro residues; that stretch reads FPSPSPSPRHP. In terms of domain architecture, Tify spans 196-231; the sequence is QNPKVTQMTIFYDGLVNVFDNIPVEKAQELMLLASR. A disordered region spans residues 296 to 327; sequence SFSSSNDSAGPKSGGLPLAVTPLSQASPSQPI. Over residues 317–327 the composition is skewed to polar residues; it reads PLSQASPSQPI. The Jas signature appears at 343-367; sequence PQARKASLARFLEKRKERVSSVAPY. Residues 345 to 352 carry the Nuclear localization signal motif; the sequence is ARKASLAR. The segment at 361–427 is disordered; it reads VSSVAPYPSS…QEPPSTKLQI (67 aa). 2 stretches are compositionally biased toward polar residues: residues 369 to 402 and 411 to 427; these read SSKS…NNCE and RNIS…KLQI.

It belongs to the TIFY/JAZ family. In terms of assembly, interacts with COI1A. Interacts with COI1A and COI1B in a coronatine-dependent manner. Coronatine is an analog of jasmonoyl isoleucine (JA-Ile). Post-translationally, ubiquitinated. Targeted for degradation by the SCF(COI1) E3 ubiquitin ligase-proteasome pathway during jasmonate signaling.

It is found in the nucleus. Repressor of jasmonate responses. This chain is Protein TIFY 6a, found in Oryza sativa subsp. japonica (Rice).